Here is a 457-residue protein sequence, read N- to C-terminus: Ig mu chain C region (457 aa).

Residues 1–105 (SSSAPLLFPL…GEKEKKVELQ (105 aa)) form a CH1 region. Cys27 and Cys89 are disulfide-bonded. 2 N-linked (GlcNAc...) asparagine glycosylation sites follow: Asn45 and Asn113. The segment at 106 to 220 (VTPELPPNVS…KNVSSVCMGD (115 aa)) is CH2. Residues Cys136 and Cys200 are joined by a disulfide bond. Asn212, Asn276, and Asn283 each carry an N-linked (GlcNAc...) asparagine glycan. A CH3 region spans residues 221–326 (DTSTGISVFL…PLKQSLSRPK (106 aa)). Cystine bridges form between Cys248/Cys307 and Cys355/Cys417. A CH4 region spans residues 327–457 (DVANDPPSVF…VLSDTASTCY (131 aa)). A glycan (N-linked (GlcNAc...) asparagine) is linked at Asn444.

The chain is Ig mu chain C region from Suncus murinus (Asian house shrew).